Here is a 316-residue protein sequence, read N- to C-terminus: Ninja-family protein 2 (316 aa).

2 disordered regions span residues 1–29 and 72–236; these read MASRDFLGRFGGEKGSSSDKAGGGAGEPD and TSDD…TSTG. Over residues 99 to 108 the composition is skewed to basic and acidic residues; the sequence is ERWRRREMQS. The segment covering 156 to 166 has biased composition (polar residues); it reads DQGNTSSSMPE. 2 stretches are compositionally biased toward low complexity: residues 179-199 and 222-235; these read SSMEISSDNNNNNNASNQNKS and LRTLRSLTMRTTST.

Belongs to the Ninja family.

It is found in the nucleus. The sequence is that of Ninja-family protein 2 (AFP-B1) from Triticum aestivum (Wheat).